The primary structure comprises 402 residues: Serine/threonine transporter SstT (402 aa).

A run of 9 helical transmembrane segments spans residues 19–39, 43–63, 86–106, 138–158, 179–199, 212–232, 287–307, 327–347, and 354–374; these read IGVV…AIGL, LFVG…VISA, TFAA…TLIL, AITE…GLAM, VVKW…FTSI, LLIL…NPII, IPLG…ILTL, VVAA…LLLI, and FGIS…VGVI.

This sequence belongs to the dicarboxylate/amino acid:cation symporter (DAACS) (TC 2.A.23) family.

Its subcellular location is the cell membrane. The enzyme catalyses L-serine(in) + Na(+)(in) = L-serine(out) + Na(+)(out). The catalysed reaction is L-threonine(in) + Na(+)(in) = L-threonine(out) + Na(+)(out). Functionally, involved in the import of serine and threonine into the cell, with the concomitant import of sodium (symport system). This chain is Serine/threonine transporter SstT, found in Streptococcus agalactiae serotype Ia (strain ATCC 27591 / A909 / CDC SS700).